A 303-amino-acid polypeptide reads, in one-letter code: Protoporphyrin uptake protein 1 (303 aa).

At 1–18 (MSTTDSGFVLYHYTPSKA) the chain is on the extracellular side. The helical transmembrane segment at 19-39 (AAIVFVVLFIIMTVIFAVQTL) threads the bilayer. Topologically, residues 40–76 (YAARKSSKALKNNPFESSDDKVDSLEDAEYKQLKITP) are cytoplasmic. A helical transmembrane segment spans residues 77 to 97 (TVFAFIPFFTGCIMEAVGYIG). Topologically, residues 98–111 (RALSSSNPERTTPY) are extracellular. Residues 112-132 (IIQSVLLLVAPALIAATIYMI) traverse the membrane as a helical segment. Residues 133 to 154 (FGRLLHVMRCQSLILISARFGT) lie on the Cytoplasmic side of the membrane. A helical transmembrane segment spans residues 155–175 (TFFVVGDVFSFFLQAAGGGLM). Residues 176–183 (SKAGSTKT) are Extracellular-facing. Residues 184 to 204 (GSGLITAGLFVQVIFFGFFII) form a helical membrane-spanning segment. Residues 205–226 (NEIRFTVNVKRRCLFYEDISRK) are Cytoplasmic-facing. A helical transmembrane segment spans residues 227-247 (WIFVNATLLLSSMLILLRSIV). Over 248 to 264 (RIVEFIQGFNGYIISHE) the chain is Extracellular. The chain crosses the membrane as a helical span at residues 265–285 (YFIYVFDAVPMLLVIIAFSVG). Residues 286–303 (SFFGNVFDVIKECQTLSN) are Cytoplasmic-facing.

The protein belongs to the lipid-translocating exporter (LTE) (TC 9.A.26.1) family. In terms of processing, N-glycosylated.

The protein resides in the cell membrane. Involved in inducible protoporphyrin IX influx and heme efflux. This Saccharomyces cerevisiae (strain ATCC 204508 / S288c) (Baker's yeast) protein is Protoporphyrin uptake protein 1 (PUG1).